We begin with the raw amino-acid sequence, 404 residues long: Protein L-Myc-1b (404 aa).

Disordered stretches follow at residues 175–195 (KKQV…EEID) and 238–331 (QQHN…FLER). Residues 287–315 (VPAQSPTVSASPTHTSYHLKSQPSSPQSS) are compositionally biased toward polar residues. Residues 321 to 373 (DKRKTHNFLERKRRNDLRSRFLALRDEIPGLVDCPKTPKVVILTKATEYLRTL) form the bHLH domain. Residues 373–401 (LHVSDRQKAQEKKQLKSKQQQLLRRLAEL) are leucine-zipper.

Efficient DNA binding requires dimerization with another bHLH protein. Binds DNA as a heterodimer with max.

It localises to the nucleus. The protein is Protein L-Myc-1b of Danio rerio (Zebrafish).